The sequence spans 117 residues: Large ribosomal subunit protein uL18 (117 aa).

Belongs to the universal ribosomal protein uL18 family. In terms of assembly, part of the 50S ribosomal subunit; part of the 5S rRNA/L5/L18/L25 subcomplex. Contacts the 5S and 23S rRNAs.

Its function is as follows. This is one of the proteins that bind and probably mediate the attachment of the 5S RNA into the large ribosomal subunit, where it forms part of the central protuberance. The sequence is that of Large ribosomal subunit protein uL18 from Acidithiobacillus ferrooxidans (strain ATCC 23270 / DSM 14882 / CIP 104768 / NCIMB 8455) (Ferrobacillus ferrooxidans (strain ATCC 23270)).